The chain runs to 519 residues: Sugar transport protein MST5 (519 aa).

At 1–18 the chain is on the cytoplasmic side; it reads MAGGAMVQTVGGKTYPGK. A helical membrane pass occupies residues 19–39; it reads MTAFVFFTCLVASSGGLIFGY. Residues 40–80 lie on the Extracellular side of the membrane; it reads DIGISGGVTSMDSFLSEFFPSVYAQAKASKDTNQYCKFDSQ. A helical transmembrane segment spans residues 81 to 101; the sequence is LLTLFTSSLYLAALATSFVAA. At 102 to 110 the chain is on the cytoplasmic side; that stretch reads WVTRVFGRK. The chain crosses the membrane as a helical span at residues 111–127; sequence WSMFCGGVTFLAGSALN. A topological domain (extracellular) is located at residue G128. A helical transmembrane segment spans residues 129–149; the sequence is AATDVMMLILGRILLGIGVGF. Over 150-167 the chain is Cytoplasmic; the sequence is ANQSVPLYLSEMAPANLR. A helical membrane pass occupies residues 168–188; the sequence is GMLNIGFQLMTTIGILSANLI. The Extracellular segment spans residues 189 to 202; the sequence is NYATSSIEGGWGWR. The chain crosses the membrane as a helical span at residues 203–223; that stretch reads IGLGLAGVPALIITLGALVLP. Topologically, residues 224–295 are cytoplasmic; sequence DTPNSLIARG…IAILIPCFQQ (72 aa). A helical transmembrane segment spans residues 296-316; sequence LTGINVIMFYAPVLFLTIGFA. Residues 317–321 lie on the Extracellular side of the membrane; the sequence is GDASL. Residues 322-342 traverse the membrane as a helical segment; sequence MSAVITGLVNMFATVVSIISV. Residues 343-357 lie on the Cytoplasmic side of the membrane; sequence DRLGRRVLFLQGGTQ. A helical membrane pass occupies residues 358–378; the sequence is MFISQVVVGTLIALQFGVAGV. Residues 379–386 lie on the Extracellular side of the membrane; that stretch reads GEMSRSYA. A helical transmembrane segment spans residues 387–407; it reads ILLVLFICMYVAGFAWSWGPL. Topologically, residues 408 to 426 are cytoplasmic; sequence GWLVPSEVFALEIRSAGQS. A helical membrane pass occupies residues 427–447; sequence IAVCVNMMLTFVIGQAFLTML. At 448–451 the chain is on the extracellular side; sequence CHLK. A helical membrane pass occupies residues 452 to 472; that stretch reads FGLFYFFAGWMLVMTTFVALF. The Cytoplasmic portion of the chain corresponds to 473 to 519; sequence LPETKGVPIEEMNHVWSRHWFWGSYVTAHDVAGAGAGGGGNRRSHNV.

The protein belongs to the major facilitator superfamily. Sugar transporter (TC 2.A.1.1) family. In terms of tissue distribution, expressed in panicles before heading. Expressed in flowers before pollination.

Its subcellular location is the membrane. Its function is as follows. Mediates active uptake of hexoses by sugar:proton symport. Can transport glucose, xylose and 3-O-methylglucose. May play a role at the early stage of seed development. The polypeptide is Sugar transport protein MST5 (Oryza sativa subsp. japonica (Rice)).